The chain runs to 971 residues: uncharacterized protein (971 aa).

This is an uncharacterized protein from Borreliella burgdorferi (strain ATCC 35210 / DSM 4680 / CIP 102532 / B31) (Borrelia burgdorferi).